Consider the following 352-residue polypeptide: UDP-N-acetylglucosamine--N-acetylmuramyl-(pentapeptide) pyrophosphoryl-undecaprenol N-acetylglucosamine transferase (352 aa).

UDP-N-acetyl-alpha-D-glucosamine contacts are provided by residues 14-16, Asn-124, Arg-164, Ser-185, and Gln-285; that span reads TGG.

Belongs to the glycosyltransferase 28 family. MurG subfamily.

The protein resides in the cell inner membrane. It carries out the reaction di-trans,octa-cis-undecaprenyl diphospho-N-acetyl-alpha-D-muramoyl-L-alanyl-D-glutamyl-meso-2,6-diaminopimeloyl-D-alanyl-D-alanine + UDP-N-acetyl-alpha-D-glucosamine = di-trans,octa-cis-undecaprenyl diphospho-[N-acetyl-alpha-D-glucosaminyl-(1-&gt;4)]-N-acetyl-alpha-D-muramoyl-L-alanyl-D-glutamyl-meso-2,6-diaminopimeloyl-D-alanyl-D-alanine + UDP + H(+). Its pathway is cell wall biogenesis; peptidoglycan biosynthesis. Cell wall formation. Catalyzes the transfer of a GlcNAc subunit on undecaprenyl-pyrophosphoryl-MurNAc-pentapeptide (lipid intermediate I) to form undecaprenyl-pyrophosphoryl-MurNAc-(pentapeptide)GlcNAc (lipid intermediate II). The sequence is that of UDP-N-acetylglucosamine--N-acetylmuramyl-(pentapeptide) pyrophosphoryl-undecaprenol N-acetylglucosamine transferase from Chlamydia trachomatis serovar A (strain ATCC VR-571B / DSM 19440 / HAR-13).